The following is an 82-amino-acid chain: Protein CYSTEINE-RICH TRANSMEMBRANE MODULE 13 (82 aa).

Positions 1–58 are disordered; the sequence is MYHQEQHPVGAPPPQGYPPKDGYPPAGYPPAGYPPPGYAQGYPAQGYPPPQYSQAPQQ. Pro residues predominate over residues 26 to 37; sequence AGYPPAGYPPPG. The chain crosses the membrane as a helical span at residues 59–76; the sequence is KQNAGMLEGCLAALCCCC.

The protein belongs to the CYSTM1 family. Homodimer and heterodimers. Interacts with CYSTM7, CYTSM3, CYTSM4, CYTSM5, CYTSM6, CYTSM9, CYTSM10 and CYTSM11. Binds weakly to CYSTM1 and CYSTM2. Expressed in root meristem, root vasculature, leaf vasculature and floral organ primordia. Mostly expressed in roots and flowers and, to a lower extent, in stems, siliques and leaves.

It localises to the cell membrane. Required for the promotion of megasporogenesis, or promotion of germ cell formation from somatic precursor cells. Acts redundantly with WIH2. Functions in a genetic pathway downstream of SPL/NZZ and WUS and together with TRN2 in promoting megasporogenesis. Involved in resistance to abiotic stress. This is Protein CYSTEINE-RICH TRANSMEMBRANE MODULE 13 from Arabidopsis thaliana (Mouse-ear cress).